A 239-amino-acid polypeptide reads, in one-letter code: 4-hydroxy-tetrahydrodipicolinate reductase (239 aa).

Residues 8-13 (GSTGKM), 78-80 (GTT), and 102-105 (SANM) each bind NAD(+). H134 serves as the catalytic Proton donor/acceptor. H135 is a binding site for (S)-2,3,4,5-tetrahydrodipicolinate. Catalysis depends on K138, which acts as the Proton donor. Residue 144-145 (GT) participates in (S)-2,3,4,5-tetrahydrodipicolinate binding.

Belongs to the DapB family.

The protein resides in the cytoplasm. It carries out the reaction (S)-2,3,4,5-tetrahydrodipicolinate + NAD(+) + H2O = (2S,4S)-4-hydroxy-2,3,4,5-tetrahydrodipicolinate + NADH + H(+). It catalyses the reaction (S)-2,3,4,5-tetrahydrodipicolinate + NADP(+) + H2O = (2S,4S)-4-hydroxy-2,3,4,5-tetrahydrodipicolinate + NADPH + H(+). It participates in amino-acid biosynthesis; L-lysine biosynthesis via DAP pathway; (S)-tetrahydrodipicolinate from L-aspartate: step 4/4. Catalyzes the conversion of 4-hydroxy-tetrahydrodipicolinate (HTPA) to tetrahydrodipicolinate. This chain is 4-hydroxy-tetrahydrodipicolinate reductase, found in Rickettsia africae (strain ESF-5).